The following is a 38-amino-acid chain: Photosystem II reaction center protein M (38 aa).

The chain crosses the membrane as a helical span at residues 7-27 (GFVASILFVLVPTVFLLILYI).

The protein belongs to the PsbM family. As to quaternary structure, PSII is composed of 1 copy each of membrane proteins PsbA, PsbB, PsbC, PsbD, PsbE, PsbF, PsbH, PsbI, PsbJ, PsbK, PsbL, PsbM, PsbT, PsbX, PsbY, PsbZ, Psb30/Ycf12, peripheral proteins PsbO, CyanoQ (PsbQ), PsbU, PsbV and a large number of cofactors. It forms dimeric complexes.

It is found in the cellular thylakoid membrane. Functionally, one of the components of the core complex of photosystem II (PSII). PSII is a light-driven water:plastoquinone oxidoreductase that uses light energy to abstract electrons from H(2)O, generating O(2) and a proton gradient subsequently used for ATP formation. It consists of a core antenna complex that captures photons, and an electron transfer chain that converts photonic excitation into a charge separation. This subunit is found at the monomer-monomer interface. This is Photosystem II reaction center protein M from Nostoc punctiforme (strain ATCC 29133 / PCC 73102).